The sequence spans 200 residues: Protein DMP7 (200 aa).

4 consecutive transmembrane segments (helical) span residues 37-57 (LSNL…PVLT), 69-89 (WLTC…SFTD), 129-149 (ILDF…SMFD), and 167-187 (ILTS…LAFP).

The protein belongs to the plant DMP1 protein family. Expressed in leaves, stems, flowers, siliques and roots, especially in the vasculature.

The protein resides in the endoplasmic reticulum membrane. Involved in membrane remodeling. The sequence is that of Protein DMP7 from Arabidopsis thaliana (Mouse-ear cress).